Consider the following 426-residue polypeptide: Histidine--tRNA ligase (426 aa).

Belongs to the class-II aminoacyl-tRNA synthetase family.

Its subcellular location is the cytoplasm. The enzyme catalyses tRNA(His) + L-histidine + ATP = L-histidyl-tRNA(His) + AMP + diphosphate + H(+). This Saccharolobus islandicus (strain L.S.2.15 / Lassen #1) (Sulfolobus islandicus) protein is Histidine--tRNA ligase.